Consider the following 81-residue polypeptide: Photosystem I iron-sulfur center (81 aa).

2 consecutive 4Fe-4S ferredoxin-type domains span residues 2 to 31 and 39 to 68; these read SHSV…MIPW and IASA…VRVY. Cys-11, Cys-14, Cys-17, Cys-21, Cys-48, Cys-51, Cys-54, and Cys-58 together coordinate [4Fe-4S] cluster.

As to quaternary structure, the eukaryotic PSI reaction center is composed of at least 11 subunits. [4Fe-4S] cluster serves as cofactor.

It is found in the plastid. The protein resides in the chloroplast thylakoid membrane. The catalysed reaction is reduced [plastocyanin] + hnu + oxidized [2Fe-2S]-[ferredoxin] = oxidized [plastocyanin] + reduced [2Fe-2S]-[ferredoxin]. In terms of biological role, apoprotein for the two 4Fe-4S centers FA and FB of photosystem I (PSI); essential for photochemical activity. FB is the terminal electron acceptor of PSI, donating electrons to ferredoxin. The C-terminus interacts with PsaA/B/D and helps assemble the protein into the PSI complex. Required for binding of PsaD and PsaE to PSI. PSI is a plastocyanin-ferredoxin oxidoreductase, converting photonic excitation into a charge separation, which transfers an electron from the donor P700 chlorophyll pair to the spectroscopically characterized acceptors A0, A1, FX, FA and FB in turn. This Triticum aestivum (Wheat) protein is Photosystem I iron-sulfur center.